The following is a 66-amino-acid chain: MFTLKKSMLLLFFLGTINLSLCQEERDAEEERRDEDNAKMEEIKRGIFSTVFKAGKGIVCGLTGLC.

Residues Met1–Cys22 form the signal peptide. A propeptide spans Gln23–Ile43 (removed in mature form). Residues Cys60 and Cys66 are joined by a disulfide bond.

Expressed by the skin glands.

Its subcellular location is the secreted. Has antimicrobial activity against Gram-negative bacterium E.coli ATCC 8739 (MIC=25 ug), against Gram positive bacteria S.aureus ATCC 6538 (MIC=3.1 ug), methicillin-resistant S.aureus ATCC 43300 (MIC=12.5 ug), B.subtilis ATCC 6633 (MIC=12.5 ug) and against fungus C.albicans ATCC 90028 (MIC=50 ug). This Odorrana ishikawae (Ishikawa's frog) protein is Nigrocin-2ISa.